A 476-amino-acid polypeptide reads, in one-letter code: Glycogen synthase (476 aa).

ADP-alpha-D-glucose is bound at residue Lys15.

Belongs to the glycosyltransferase 1 family. Bacterial/plant glycogen synthase subfamily.

The catalysed reaction is [(1-&gt;4)-alpha-D-glucosyl](n) + ADP-alpha-D-glucose = [(1-&gt;4)-alpha-D-glucosyl](n+1) + ADP + H(+). Its pathway is glycan biosynthesis; glycogen biosynthesis. In terms of biological role, synthesizes alpha-1,4-glucan chains using ADP-glucose. This chain is Glycogen synthase, found in Bacillus cereus (strain B4264).